A 617-amino-acid chain; its full sequence is 1-deoxy-D-xylulose-5-phosphate synthase (617 aa).

Thiamine diphosphate-binding positions include His-76 and 117 to 119; that span reads GHS. Mg(2+) is bound at residue Asp-148. Residues 149-150, Asn-177, Tyr-285, and Glu-366 contribute to the thiamine diphosphate site; that span reads GA. Asn-177 contacts Mg(2+).

This sequence belongs to the transketolase family. DXPS subfamily. Homodimer. The cofactor is Mg(2+). Thiamine diphosphate serves as cofactor.

It carries out the reaction D-glyceraldehyde 3-phosphate + pyruvate + H(+) = 1-deoxy-D-xylulose 5-phosphate + CO2. Its pathway is metabolic intermediate biosynthesis; 1-deoxy-D-xylulose 5-phosphate biosynthesis; 1-deoxy-D-xylulose 5-phosphate from D-glyceraldehyde 3-phosphate and pyruvate: step 1/1. Catalyzes the acyloin condensation reaction between C atoms 2 and 3 of pyruvate and glyceraldehyde 3-phosphate to yield 1-deoxy-D-xylulose-5-phosphate (DXP). This Histophilus somni (strain 129Pt) (Haemophilus somnus) protein is 1-deoxy-D-xylulose-5-phosphate synthase.